The following is a 275-amino-acid chain: MTNDLYAVVGNPISHSKSPRIHSLFAQQTGEAVEYTAIQAPLEDFAGTVHHFFDHGGKGLNITVPFKEQAWTLAEHRTHRAELAGAANTLYLDQEDQLVADNTDGVGIVRDLRDNHGVPLKGARVLVLGAGGAVRGVLGPLLDEQPASVVVANRTVARAEALARLFGREHSGIELSACGFEQVEGPFDLVINGTSASLKGDLPAITADVIRADTVVYDMMYSLQTTTFNQWALDHGAVRVFDGLGMLVEQAAEAFFVWRGVRPETSAVTEELRTD.

Shikimate-binding positions include 16-18 (SKS) and Thr-63. The Proton acceptor role is filled by Lys-67. Residues Asn-88 and Asp-104 each coordinate shikimate. Residues 129–133 (GAGGA), 153–158 (NRTVAR), and Met-219 contribute to the NADP(+) site. Tyr-221 is a binding site for shikimate. Position 243 (Gly-243) interacts with NADP(+).

It belongs to the shikimate dehydrogenase family. As to quaternary structure, homodimer.

It carries out the reaction shikimate + NADP(+) = 3-dehydroshikimate + NADPH + H(+). It functions in the pathway metabolic intermediate biosynthesis; chorismate biosynthesis; chorismate from D-erythrose 4-phosphate and phosphoenolpyruvate: step 4/7. Functionally, involved in the biosynthesis of the chorismate, which leads to the biosynthesis of aromatic amino acids. Catalyzes the reversible NADPH linked reduction of 3-dehydroshikimate (DHSA) to yield shikimate (SA). This Marinobacter nauticus (strain ATCC 700491 / DSM 11845 / VT8) (Marinobacter aquaeolei) protein is Shikimate dehydrogenase (NADP(+)).